The chain runs to 496 residues: Glutamyl-tRNA(Gln) amidotransferase subunit A, mitochondrial (496 aa).

Active-site charge relay system residues include Lys75 and Ser162. Ser186 acts as the Acyl-ester intermediate in catalysis.

It belongs to the amidase family. GatA subfamily. Subunit of the heterotrimeric GatCAB amidotransferase (AdT) complex, composed of A, B and C subunits.

The protein localises to the mitochondrion. It carries out the reaction L-glutamyl-tRNA(Gln) + L-glutamine + ATP + H2O = L-glutaminyl-tRNA(Gln) + L-glutamate + ADP + phosphate + H(+). Its function is as follows. Allows the formation of correctly charged Gln-tRNA(Gln) through the transamidation of misacylated Glu-tRNA(Gln) in the mitochondria. The reaction takes place in the presence of glutamine and ATP through an activated gamma-phospho-Glu-tRNA(Gln). The sequence is that of Glutamyl-tRNA(Gln) amidotransferase subunit A, mitochondrial from Pediculus humanus subsp. corporis (Body louse).